The primary structure comprises 357 residues: Alanine racemase (357 aa).

The active-site Proton acceptor; specific for D-alanine is Lys35. Lys35 is modified (N6-(pyridoxal phosphate)lysine). Arg131 provides a ligand contact to substrate. The Proton acceptor; specific for L-alanine role is filled by Tyr256. Met304 is a binding site for substrate.

The protein belongs to the alanine racemase family. The cofactor is pyridoxal 5'-phosphate.

It carries out the reaction L-alanine = D-alanine. The protein operates within amino-acid biosynthesis; D-alanine biosynthesis; D-alanine from L-alanine: step 1/1. Catalyzes the interconversion of L-alanine and D-alanine. May also act on other amino acids. The chain is Alanine racemase (alr) from Legionella pneumophila (strain Paris).